We begin with the raw amino-acid sequence, 336 residues long: Phenylalanine--tRNA ligase alpha subunit (336 aa).

Glutamate 257 is a binding site for Mg(2+).

Belongs to the class-II aminoacyl-tRNA synthetase family. Phe-tRNA synthetase alpha subunit type 1 subfamily. As to quaternary structure, tetramer of two alpha and two beta subunits. It depends on Mg(2+) as a cofactor.

The protein resides in the cytoplasm. The enzyme catalyses tRNA(Phe) + L-phenylalanine + ATP = L-phenylalanyl-tRNA(Phe) + AMP + diphosphate + H(+). The chain is Phenylalanine--tRNA ligase alpha subunit from Xanthomonas campestris pv. campestris (strain 8004).